A 1572-amino-acid polypeptide reads, in one-letter code: E3 ubiquitin-protein ligase HECW2 (1572 aa).

Ser-48 carries the post-translational modification Phosphoserine. One can recognise a C2 domain in the interval 167–301 (GAEGMEGGAS…QAIGDQMLSY (135 aa)). 2 disordered regions span residues 341–452 (VNSV…SSFP) and 489–796 (IMFS…PSVR). Residues 400-410 (TSTSSRTSPPR) are compositionally biased toward low complexity. The segment covering 518-532 (ASTHEAASFEDKPEN) has biased composition (basic and acidic residues). Composition is skewed to polar residues over residues 572-588 (EVDQ…SDAS), 597-614 (ETES…SSET), 643-664 (SSCN…SSLE), and 688-703 (PTSS…SVCT). Residues 737-1068 (WQRRGSLEGA…PRPSSTFNTV (332 aa)) form an interaction with TP73 region. Low complexity predominate over residues 744 to 776 (EGAAAAAESPPQEEGSAGEAQGTCEGATAQEEG). Residues 807–840 (EALPPNWEARIDSHGRIFYVDHVNRTTTWQRPTA) form the WW 1 domain. A coiled-coil region spans residues 847-874 (LQRSNSIQQMEQLNRRYQSIRRTMTNER). Residues Ser-852 and Ser-909 each carry the phosphoserine modification. The 34-residue stretch at 985–1018 (LELPRGWEMKHDHQGKAFFVDHNSRTTTFIDPRL) folds into the WW 2 domain. Disordered regions lie at residues 1024–1069 (RPTS…NTVS) and 1161–1187 (CQSP…RAPA). A compositionally biased stretch (basic residues) spans 1031 to 1040 (HRQHLTRQRS). Polar residues predominate over residues 1161–1181 (CQSPRGSPVSSPQNSPGTQRA). Phosphoserine is present on Ser-1175. One can recognise an HECT domain in the interval 1237–1572 (SRKDLQRNKL…VEETSTFGLE (336 aa)). Catalysis depends on Cys-1540, which acts as the Glycyl thioester intermediate.

Interacts with TP73. Interacts with FZR1. Post-translationally, ubiquitinated and degraded during mitotic exit by APC/C-Cdh1. In terms of tissue distribution, predominantly expressed in adult brain, lung and heart.

The protein localises to the cytoplasm. Its subcellular location is the cytoskeleton. It is found in the spindle. It carries out the reaction S-ubiquitinyl-[E2 ubiquitin-conjugating enzyme]-L-cysteine + [acceptor protein]-L-lysine = [E2 ubiquitin-conjugating enzyme]-L-cysteine + N(6)-ubiquitinyl-[acceptor protein]-L-lysine.. It participates in protein modification; protein ubiquitination. Its function is as follows. E3 ubiquitin-protein ligase that mediates ubiquitination of TP73. Acts to stabilize TP73 and enhance activation of transcription by TP73. Involved in the regulation of mitotic metaphase/anaphase transition. In Homo sapiens (Human), this protein is E3 ubiquitin-protein ligase HECW2 (HECW2).